Consider the following 331-residue polypeptide: NADH-quinone oxidoreductase subunit H (331 aa).

Transmembrane regions (helical) follow at residues 5-25 (LFFVITTIVKAVVILAVMASL), 45-65 (GPDMVGPAGVLQIVADMIKLF), 78-98 (FIFLIAPLISAIAAFAALAPV), 122-142 (VLYIAGVAAVCVFSPLAAGLA), 156-176 (VVALLSFEVVAGMALLSVVMV), 192-212 (IFNWLIFKQPLAFVLFVMASF), 245-265 (FFIGEYTNMIAASIIITLLFL), 271-291 (FLFIPGALMIILKSSLVFFFF), and 311-331 (WKILLPLGILNVVITGFALLI).

It belongs to the complex I subunit 1 family. In terms of assembly, NDH-1 is composed of 14 different subunits. Subunits NuoA, H, J, K, L, M, N constitute the membrane sector of the complex.

It is found in the cell inner membrane. The catalysed reaction is a quinone + NADH + 5 H(+)(in) = a quinol + NAD(+) + 4 H(+)(out). NDH-1 shuttles electrons from NADH, via FMN and iron-sulfur (Fe-S) centers, to quinones in the respiratory chain. The immediate electron acceptor for the enzyme in this species is believed to be ubiquinone. Couples the redox reaction to proton translocation (for every two electrons transferred, four hydrogen ions are translocated across the cytoplasmic membrane), and thus conserves the redox energy in a proton gradient. This subunit may bind ubiquinone. The protein is NADH-quinone oxidoreductase subunit H of Campylobacter concisus (strain 13826).